Consider the following 489-residue polypeptide: COX3 mRNA-specific translational activator PET494 (489 aa).

The protein localises to the mitochondrion inner membrane. Functionally, required for the expression of the mitochondrial gene for cytochrome c oxidase subunit III (COX3). The polypeptide is COX3 mRNA-specific translational activator PET494 (PET494) (Saccharomyces cerevisiae (strain ATCC 204508 / S288c) (Baker's yeast)).